Reading from the N-terminus, the 179-residue chain is Transcription factor 21 (179 aa).

The interval 19–88 (DCDSLKVDSN…VQRNAANARE (70 aa)) is disordered. 2 stretches are compositionally biased toward polar residues: residues 30 to 49 (EFGT…NGSP) and 70 to 80 (SGVSQEGKQVQ). The bHLH domain occupies 79–131 (VQRNAANARERARMRVLSKAFSRLKTTLPWVPPDTKLSKLDTLRLASSYIAHL).

As to quaternary structure, efficient DNA binding requires dimerization with another bHLH protein. Forms a heterodimer with TCF3 and binds the E box (5'-CANNTG-3'). Expressed at high levels in lung, kidney, gut, heart, ovary and podocytes (visceral glomerular epithelial cells). Also found in spleen, large intestine, uterus, bladder and testis.

It is found in the nucleus. Its function is as follows. Involved in epithelial-mesenchymal interactions in kidney and lung morphogenesis that include epithelial differentiation and branching morphogenesis. May be involved in the organogenesis of the spleen and heart and in cardiac and coronary artery development. May function in the development and sex differentiation of gonad via transcriptional regulation of AD4BP/SF-1. This Mus musculus (Mouse) protein is Transcription factor 21 (Tcf21).